A 476-amino-acid chain; its full sequence is Aspartyl/glutamyl-tRNA(Asn/Gln) amidotransferase subunit B 1 (476 aa).

The protein belongs to the GatB/GatE family. GatB subfamily. In terms of assembly, heterotrimer of A, B and C subunits.

The enzyme catalyses L-glutamyl-tRNA(Gln) + L-glutamine + ATP + H2O = L-glutaminyl-tRNA(Gln) + L-glutamate + ADP + phosphate + H(+). It catalyses the reaction L-aspartyl-tRNA(Asn) + L-glutamine + ATP + H2O = L-asparaginyl-tRNA(Asn) + L-glutamate + ADP + phosphate + 2 H(+). In terms of biological role, allows the formation of correctly charged Asn-tRNA(Asn) or Gln-tRNA(Gln) through the transamidation of misacylated Asp-tRNA(Asn) or Glu-tRNA(Gln) in organisms which lack either or both of asparaginyl-tRNA or glutaminyl-tRNA synthetases. The reaction takes place in the presence of glutamine and ATP through an activated phospho-Asp-tRNA(Asn) or phospho-Glu-tRNA(Gln). This Clostridium acetobutylicum (strain ATCC 824 / DSM 792 / JCM 1419 / IAM 19013 / LMG 5710 / NBRC 13948 / NRRL B-527 / VKM B-1787 / 2291 / W) protein is Aspartyl/glutamyl-tRNA(Asn/Gln) amidotransferase subunit B 1 (gatB1).